A 107-amino-acid chain; its full sequence is Biphenyl 2,3-dioxygenase, ferredoxin component (107 aa).

The 96-residue stretch at 4–99 (TKICSSGDLA…VKLEGDDVLV (96 aa)) folds into the Rieske domain. [2Fe-2S] cluster is bound by residues Cys-43, His-45, Cys-62, and His-65.

This sequence belongs to the bacterial ring-hydroxylating dioxygenase ferredoxin component family. In terms of assembly, the multicomponent biphenyl dioxygenase system is composed of a ferredoxin reductase (BphA4), a ferredoxin (BphA3), and a terminal oxygenase (BphA1A2). It depends on [2Fe-2S] cluster as a cofactor.

It functions in the pathway xenobiotic degradation; biphenyl degradation. Functionally, ferredoxin component of the biphenyl dioxygenase system that catalyzes the stereospecific dihydroxylation of the aromatic ring of biphenyl, yielding a dihydrodiol compound. Is likely involved in biphenyl degradation that allows growth of Rhodococcus sp. strain RHA1 on biphenyl as the sole source of carbon and energy. The dioxygenase system can also use naphtalene and 4-chlorobiphenyl (4-CB) as substrates, as well as some polychlorinated biphenyls (PCB) such as 2,2'-dichlorobiphenyl, 2,3-dichlorobiphenyl and 2,5,2'-trichlorobiphenyl. It exhibits weak activity toward dibenzofuran and dibenzo-p-dioxin. Electrons are transferred from NADH to the [2Fe-2S] cluster in BphA1 via FAD of BphA4 and [2Fe-2S] cluster of BphA3. In Rhodococcus jostii (strain RHA1), this protein is Biphenyl 2,3-dioxygenase, ferredoxin component.